The sequence spans 91 residues: Early E3B 10.4 kDa protein (91 aa).

The signal sequence occupies residues 1–22 (MIPRNFFFTILICAFNVCATFT). The Lumenal portion of the chain corresponds to 23-34 (AVATASPDCIGP). A helical transmembrane segment spans residues 35–60 (FASYALFAFVTCICVCSIVCLVINFF). Residues 61–91 (QLVDWIFVRIAYLRHHPEYRNQNVAALLRLI) lie on the Cytoplasmic side of the membrane.

The protein belongs to the adenoviridae E3B family.

The protein resides in the host endoplasmic reticulum membrane. Down-regulates the EGF receptor. This chain is Early E3B 10.4 kDa protein, found in Homo sapiens (Human).